A 360-amino-acid polypeptide reads, in one-letter code: Luc7-like protein (360 aa).

The stretch at 143-206 (KEQNSKITEL…QEKNENKRMS (64 aa)) forms a coiled coil. Positions 255–360 (LGRTDFYNAP…DDRRKRDRNY (106 aa)) are disordered. The span at 269–293 (DSYRDDRRSSSSSYHDIDGRRDHRY) shows a compositional bias: basic and acidic residues. Positions 312–321 (NNGRGSSRDN) are enriched in low complexity. Residues 329 to 360 (RDYRNDHGKDYDRKRERDYYNDDDRRKRDRNY) show a composition bias toward basic and acidic residues.

Belongs to the Luc7 family.

Its subcellular location is the nucleus. In terms of biological role, may play a role in RNA splicing. The protein is Luc7-like protein (crop) of Dictyostelium discoideum (Social amoeba).